A 235-amino-acid chain; its full sequence is Type III pantothenate kinase (235 aa).

6-13 provides a ligand contact to ATP; that stretch reads DVGNTSLK. Substrate contacts are provided by residues tyrosine 79 and 86–89; that span reads GIDR. The active-site Proton acceptor is aspartate 88. Aspartate 109 provides a ligand contact to K(+). Position 112 (threonine 112) interacts with ATP. Threonine 164 contacts substrate.

The protein belongs to the type III pantothenate kinase family. In terms of assembly, homodimer. NH4(+) is required as a cofactor. It depends on K(+) as a cofactor.

It localises to the cytoplasm. It catalyses the reaction (R)-pantothenate + ATP = (R)-4'-phosphopantothenate + ADP + H(+). Its pathway is cofactor biosynthesis; coenzyme A biosynthesis; CoA from (R)-pantothenate: step 1/5. Its function is as follows. Catalyzes the phosphorylation of pantothenate (Pan), the first step in CoA biosynthesis. The sequence is that of Type III pantothenate kinase from Pseudoalteromonas translucida (strain TAC 125).